Reading from the N-terminus, the 524-residue chain is Coatomer subunit delta-1 (524 aa).

The disordered stretch occupies residues 215–244; it reads MDMDSFASKPKGGRPSAAATAPGKGLGMKL. Residues 283–524 form the MHD domain; that stretch reads SDPVTVTIEE…RLVAANYQVV (242 aa).

Belongs to the adaptor complexes medium subunit family. Delta-COP subfamily. In terms of assembly, oligomeric complex that consists of at least the alpha, beta, beta', gamma, delta, epsilon and zeta subunits.

Its subcellular location is the cytoplasm. The protein resides in the golgi apparatus membrane. It is found in the cytoplasmic vesicle. It localises to the COPI-coated vesicle membrane. In terms of biological role, the coatomer is a cytosolic protein complex that binds to dilysine motifs and reversibly associates with Golgi non-clathrin-coated vesicles, which further mediate biosynthetic protein transport from the ER, via the Golgi up to the trans Golgi network. Coatomer complex is required for budding from Golgi membranes, and is essential for the retrograde Golgi-to-ER transport of dilysine-tagged proteins. The protein is Coatomer subunit delta-1 of Oryza sativa subsp. japonica (Rice).